Consider the following 612-residue polypeptide: Anaerobic magnesium-protoporphyrin IX monomethyl ester cyclase (612 aa).

Positions 9–143 (NYHSGGAEIA…KAYEADNFAE (135 aa)) constitute a B12-binding domain. The 228-residue stretch at 190-417 (PLGVRVAIPN…MKPKALTRGE (228 aa)) folds into the Radical SAM core domain. [4Fe-4S] cluster-binding residues include C204, C208, and C211.

It belongs to the BchE family. [4Fe-4S] cluster serves as cofactor. The cofactor is adenosylcob(III)alamin.

It carries out the reaction Mg-protoporphyrin IX 13-monomethyl ester + 3 S-adenosyl-L-methionine + H2O = 3,8-divinyl protochlorophyllide a + 3 5'-deoxyadenosine + 3 L-methionine + 4 H(+). It functions in the pathway porphyrin-containing compound metabolism; bacteriochlorophyll biosynthesis (light-independent). In terms of biological role, involved in the tetrapyrrole biosynthetic pathways leading to chlorophyll and bacteriochlorophyll (BChl). Catalyzes the anaerobic formation of the isocyclic ring (E-ring) in Mg-protoporphyrin monomethyl ester (MPE) to yield protochlorophyllide a (PChlide a) via a six-electron oxidation and the formation of an oxo group at position C13 using oxygen from a water molecule. This Cereibacter sphaeroides (strain ATCC 17023 / DSM 158 / JCM 6121 / CCUG 31486 / LMG 2827 / NBRC 12203 / NCIMB 8253 / ATH 2.4.1.) (Rhodobacter sphaeroides) protein is Anaerobic magnesium-protoporphyrin IX monomethyl ester cyclase.